A 311-amino-acid polypeptide reads, in one-letter code: Lipoyl synthase (311 aa).

Residues Cys47, Cys52, Cys58, Cys73, Cys77, Cys80, and Ser286 each coordinate [4Fe-4S] cluster. The Radical SAM core domain occupies 59 to 276 (WSRHTATYLA…RSVGESLGLF (218 aa)).

This sequence belongs to the radical SAM superfamily. Lipoyl synthase family. Requires [4Fe-4S] cluster as cofactor.

It localises to the cytoplasm. It catalyses the reaction [[Fe-S] cluster scaffold protein carrying a second [4Fe-4S](2+) cluster] + N(6)-octanoyl-L-lysyl-[protein] + 2 oxidized [2Fe-2S]-[ferredoxin] + 2 S-adenosyl-L-methionine + 4 H(+) = [[Fe-S] cluster scaffold protein] + N(6)-[(R)-dihydrolipoyl]-L-lysyl-[protein] + 4 Fe(3+) + 2 hydrogen sulfide + 2 5'-deoxyadenosine + 2 L-methionine + 2 reduced [2Fe-2S]-[ferredoxin]. The protein operates within protein modification; protein lipoylation via endogenous pathway; protein N(6)-(lipoyl)lysine from octanoyl-[acyl-carrier-protein]: step 2/2. Catalyzes the radical-mediated insertion of two sulfur atoms into the C-6 and C-8 positions of the octanoyl moiety bound to the lipoyl domains of lipoate-dependent enzymes, thereby converting the octanoylated domains into lipoylated derivatives. The sequence is that of Lipoyl synthase from Chlamydia trachomatis serovar A (strain ATCC VR-571B / DSM 19440 / HAR-13).